The chain runs to 687 residues: DNA-directed RNA polymerase subunit beta' (687 aa).

Zn(2+) contacts are provided by C69, C71, C87, and C90. Positions 493, 495, and 497 each coordinate Mg(2+).

It belongs to the RNA polymerase beta' chain family. RpoC1 subfamily. As to quaternary structure, in plastids the minimal PEP RNA polymerase catalytic core is composed of four subunits: alpha, beta, beta', and beta''. When a (nuclear-encoded) sigma factor is associated with the core the holoenzyme is formed, which can initiate transcription. The cofactor is Mg(2+). Zn(2+) is required as a cofactor.

The protein resides in the plastid. It is found in the chloroplast. It carries out the reaction RNA(n) + a ribonucleoside 5'-triphosphate = RNA(n+1) + diphosphate. Its function is as follows. DNA-dependent RNA polymerase catalyzes the transcription of DNA into RNA using the four ribonucleoside triphosphates as substrates. The protein is DNA-directed RNA polymerase subunit beta' of Angiopteris evecta (Mule's foot fern).